The chain runs to 223 residues: N-terminal Xaa-Pro-Lys N-methyltransferase 1 (223 aa).

The residue at position 1 (methionine 1) is an N-acetylmethionine. Threonine 2 bears the N-acetylthreonine; in N-terminal Xaa-Pro-Lys N-methyltransferase 1, N-terminally processed mark. Residues glycine 69, arginine 74, 91 to 93 (DIT), 119 to 120 (LQ), and glutamine 135 contribute to the S-adenosyl-L-methionine site.

It belongs to the methyltransferase superfamily. NTM1 family.

The protein resides in the nucleus. It carries out the reaction N-terminal L-alanyl-L-prolyl-L-lysyl-[protein] + 3 S-adenosyl-L-methionine = N-terminal N,N,N-trimethyl-L-alanyl-L-prolyl-L-lysyl-[protein] + 3 S-adenosyl-L-homocysteine + 3 H(+). The catalysed reaction is N-terminal L-seryl-L-prolyl-L-lysyl-[protein] + 3 S-adenosyl-L-methionine = N-terminal N,N,N-trimethyl-L-seryl-L-prolyl-L-lysyl-[protein] + 3 S-adenosyl-L-homocysteine + 3 H(+). The enzyme catalyses N-terminal L-prolyl-L-prolyl-L-lysyl-[protein] + 2 S-adenosyl-L-methionine = N-terminal N,N-dimethyl-L-prolyl-L-prolyl-L-lysyl-[protein] + 2 S-adenosyl-L-homocysteine + 2 H(+). Functionally, distributive alpha-N-methyltransferase that methylates the N-terminus of target proteins containing the N-terminal motif [Ala/Gly/Pro/Ser]-Pro-Lys when the initiator Met is cleaved. Specifically catalyzes mono-, di- or tri-methylation of the exposed alpha-amino group of the Ala, Gly or Ser residue in the [Ala/Gly/Ser]-Pro-Lys motif and mono- or di-methylation of Pro in the Pro-Pro-Lys motif. Some of the substrates may be primed by NTMT2-mediated monomethylation. Catalyzes the trimethylation of the N-terminal Gly in CENPA (after removal of Met-1). Responsible for the N-terminal methylation of KLHL31, MYL2, MYL3, RB1, RCC1, RPL23A and SET. Required during mitosis for normal bipolar spindle formation and chromosome segregation via its action on RCC1. The polypeptide is N-terminal Xaa-Pro-Lys N-methyltransferase 1 (NTMT1) (Homo sapiens (Human)).